We begin with the raw amino-acid sequence, 206 residues long: Glutathione peroxidase 1 (206 aa).

At Ser37 the chain carries Phosphoserine. Residue Sec52 is part of the active site. A non-standard amino acid (selenocysteine) is located at residue Sec52. N6-acetyllysine; alternate occurs at positions 91, 117, and 151. N6-succinyllysine; alternate occurs at positions 91, 117, and 151. Ser200 and Ser204 each carry phosphoserine.

This sequence belongs to the glutathione peroxidase family. Homotetramer. Interacts with MIEN1. In terms of processing, during periods of oxidative stress, Sec-52 may react with a superoxide radical, irreversibly lose hydroselenide and be converted to dehydroalanine.

Its subcellular location is the cytoplasm. It is found in the mitochondrion. The catalysed reaction is 2 glutathione + H2O2 = glutathione disulfide + 2 H2O. The enzyme catalyses a hydroperoxy polyunsaturated fatty acid + 2 glutathione = a hydroxy polyunsaturated fatty acid + glutathione disulfide + H2O. It catalyses the reaction tert-butyl hydroperoxide + 2 glutathione = tert-butanol + glutathione disulfide + H2O. It carries out the reaction cumene hydroperoxide + 2 glutathione = 2-phenylpropan-2-ol + glutathione disulfide + H2O. The catalysed reaction is (13S)-hydroperoxy-(9Z,11E)-octadecadienoate + 2 glutathione = (13S)-hydroxy-(9Z,11E)-octadecadienoate + glutathione disulfide + H2O. The enzyme catalyses (9S)-hydroperoxy-(10E,12Z)-octadecadienoate + 2 glutathione = (9S)-hydroxy-(10E,12Z)-octadecadienoate + glutathione disulfide + H2O. It catalyses the reaction (5S)-hydroperoxy-(6E,8Z,11Z,14Z)-eicosatetraenoate + 2 glutathione = (5S)-hydroxy-(6E,8Z,11Z,14Z)-eicosatetraenoate + glutathione disulfide + H2O. It carries out the reaction (12S)-hydroperoxy-(5Z,8Z,10E,14Z)-eicosatetraenoate + 2 glutathione = (12S)-hydroxy-(5Z,8Z,10E,14Z)-eicosatetraenoate + glutathione disulfide + H2O. The catalysed reaction is (12R)-hydroperoxy-(5Z,8Z,10E,14Z)-eicosatetraenoate + 2 glutathione = (12R)-hydroxy-(5Z,8Z,10E,14Z)-eicosatetraenoate + glutathione disulfide + H2O. The enzyme catalyses (15S)-hydroperoxy-(5Z,8Z,11Z,13E)-eicosatetraenoate + 2 glutathione = (15S)-hydroxy-(5Z,8Z,11Z,13E)-eicosatetraenoate + glutathione disulfide + H2O. It catalyses the reaction (5S)-hydroperoxy-(6E,8Z,11Z,14Z,17Z)-eicosapentaenoate + 2 glutathione = (5S)-hydroxy-(6E,8Z,11Z,14Z,17Z)-eicosapentaenoate + glutathione disulfide + H2O. It carries out the reaction (12S)-hydroperoxy-(5Z,8Z,10E,14Z,17Z)-eicosapentaenoate + 2 glutathione = (12S)-hydroxy-(5Z,8Z,10E,14Z,17Z)-eicosapentaenoate + glutathione disulfide + H2O. The catalysed reaction is (15S)-hydroperoxy-(5Z,8Z,11Z,13E,17Z)-eicosapentaenoate + 2 glutathione = (15S)-hydroxy-(5Z,8Z,11Z,13E,17Z)-eicosapentaenoate + glutathione disulfide + H2O. The enzyme catalyses (15S)-hydroperoxy-(11Z,13E)-eicosadienoate + 2 glutathione = (15S)-hydroxy-(11Z,13E)-eicosadienoate + glutathione disulfide + H2O. It catalyses the reaction (17S)-hydroperoxy-(4Z,7Z,10Z,13Z,15E,19Z)-docosahexaenoate + 2 glutathione = (17S)-hydroxy-(4Z,7Z,10Z,13Z,15E,19Z)-docosahexaenoate + glutathione disulfide + H2O. Functionally, catalyzes the reduction of hydroperoxides in a glutathione-dependent manner thus regulating cellular redox homeostasis. Can reduce small soluble hydroperoxides such as H2O2, cumene hydroperoxide and tert-butyl hydroperoxide, as well as several fatty acid-derived hydroperoxides. In platelets catalyzes the reduction of 12-hydroperoxyeicosatetraenoic acid, the primary product of the arachidonate 12-lipoxygenase pathway. This Sus scrofa (Pig) protein is Glutathione peroxidase 1 (GPX1).